The sequence spans 134 residues: UPF0357 protein YCL012C (134 aa).

A signal peptide spans 1-23; the sequence is MKSLFYLKLLLWVVLLSLCLLMA. Ser-71 and Ser-74 each carry phosphoserine. Lys-86 participates in a covalent cross-link: Glycyl lysine isopeptide (Lys-Gly) (interchain with G-Cter in ubiquitin).

The protein belongs to the UPF0357 family.

The polypeptide is UPF0357 protein YCL012C (Saccharomyces cerevisiae (strain ATCC 204508 / S288c) (Baker's yeast)).